We begin with the raw amino-acid sequence, 79 residues long: Short neurotoxin 8 (79 aa).

An N-terminal signal peptide occupies residues 1 to 21 (MKTLLLTLVMVTIMCLDLGYT). Cystine bridges form between Cys-24-Cys-41, Cys-34-Cys-59, Cys-63-Cys-71, and Cys-72-Cys-77.

Belongs to the three-finger toxin family. Short-chain subfamily. Type III alpha-neurotoxin sub-subfamily. In terms of tissue distribution, expressed by the venom gland.

Its subcellular location is the secreted. In terms of biological role, binds with high affinity to muscle nicotinic acetylcholine receptor (nAChR) and hinders acetylcholine binding to the receptor, thereby impairing neuromuscular transmission. Causes muscle paralysis, spasms and increased respiration. This Pseudonaja textilis (Eastern brown snake) protein is Short neurotoxin 8.